A 983-amino-acid chain; its full sequence is Polyhomeotic-like protein 3 (983 aa).

Disordered regions lie at residues 1 to 34 (MDTE…MQQP), 103 to 149 (LSSG…SSTS), 225 to 283 (VLSS…TAVT), 313 to 332 (LHSP…QQQQ), 339 to 410 (LQNS…SQSP), 477 to 509 (PGQQ…STSP), and 601 to 620 (DECV…PAAI). Composition is skewed to low complexity over residues 9 to 29 (TSSV…TSSS) and 103 to 126 (LSSG…SQTS). The span at 127–139 (INLSTSPTPAQLI) shows a compositional bias: polar residues. Low complexity predominate over residues 140–149 (SRSQASSSTS). Residues 225-257 (VLSSSQNGPPKSTSQTQSLTICHNKTTVTSSKI) show a composition bias toward polar residues. The span at 258–271 (SQRDPSPESNKKGE) shows a compositional bias: basic and acidic residues. 2 positions are modified to phosphoserine: serine 263 and serine 272. The span at 274-283 (SLESRSTAVT) shows a compositional bias: polar residues. Serine 315 is modified (phosphoserine). Positions 365-383 (SNAQSQHCSPIQSHPSPLT) are enriched in polar residues. A compositionally biased stretch (low complexity) spans 384 to 398 (VSPNQSQSAQQSVVV). Residues 477–489 (PGQQIVSPSHQQY) show a composition bias toward polar residues. Residues 490–506 (SSLQSSPIPIASPPQMS) are compositionally biased toward low complexity. A phosphothreonine mark is found at threonine 609 and threonine 614. Position 616 is a phosphoserine (serine 616). Glycyl lysine isopeptide (Lys-Gly) (interchain with G-Cter in SUMO2) cross-links involve residues lysine 691 and lysine 732. The HD1 motif lies at 691–720 (KPPQAIVKPQILTHVIEGFVIQEGLEPFPV). Phosphoserine occurs at positions 761 and 762. Residues 776 to 810 (EEMDSELLKCEFCGKMGYANEFLRSKRFCTMSCAK) form an FCS-type zinc finger. Zn(2+) contacts are provided by cysteine 785, cysteine 788, cysteine 804, and cysteine 808. A Glycyl lysine isopeptide (Lys-Gly) (interchain with G-Cter in SUMO2) cross-link involves residue lysine 810. Disordered stretches follow at residues 827 to 847 (RKPD…PDGA) and 864 to 889 (EEDL…SERE). The 65-residue stretch at 919 to 983 (WTVDDVWAFI…CARINSLKES (65 aa)) folds into the SAM domain.

As to quaternary structure, component of a PRC1-like complex.

The protein localises to the nucleus. Its function is as follows. Component of a Polycomb group (PcG) multiprotein PRC1-like complex, a complex class required to maintain the transcriptionally repressive state of many genes, including Hox genes, throughout development. PcG PRC1 complex acts via chromatin remodeling and modification of histones; it mediates monoubiquitination of histone H2A 'Lys-119', rendering chromatin heritably changed in its expressibility. The polypeptide is Polyhomeotic-like protein 3 (PHC3) (Homo sapiens (Human)).